The sequence spans 1320 residues: Protein brunelleschi (1320 aa).

A disordered region spans residues His313–Leu411. Positions Arg314–Lys327 are enriched in polar residues. Ser317 is modified (phosphoserine). Thr329 is subject to Phosphothreonine. The span at Thr329–Lys340 shows a compositional bias: basic and acidic residues. A compositionally biased stretch (polar residues) spans Ser345–Val361. The segment covering Thr362–Ala400 has biased composition (low complexity). A Phosphoserine modification is found at Ser672. The tract at residues Val923 to Ile954 is disordered. The segment covering Pro945 to Ile954 has biased composition (polar residues).

The protein belongs to the NIBP family. In terms of assembly, may be part of the multisubunit TRAPP (transport protein particle) complex.

It localises to the cytoplasm. The protein resides in the golgi apparatus. In terms of biological role, cooperates with Rab11 and fwd/PI4K to mediate the flow of membrane through the Golgi, which is required to support cleavage furrow ingression, therefore promoting cytokinesis in male meiotic cells. This is Protein brunelleschi from Drosophila melanogaster (Fruit fly).